Here is a 27-residue protein sequence, read N- to C-terminus: U1-poneritoxin-Na3b (27 aa).

Belongs to the ponericin-G family. In terms of tissue distribution, expressed by the venom gland.

Its subcellular location is the secreted. Shows a broad spectrum of activity against both Gram-positive and Gram-negative bacteria. Also has antimicrobial activity against S.cerevisiae. Has insecticidal and non-hemolytic activity. This Neoponera apicalis (Ant) protein is U1-poneritoxin-Na3b.